We begin with the raw amino-acid sequence, 80 residues long: Bowman-Birk type proteinase inhibitor DE-4 (80 aa).

Acidic residues predominate over residues Asp1–Arg10. The tract at residues Asp1 to Pro29 is disordered. Over residues Ser15 to Pro29 the composition is skewed to low complexity. 7 cysteine pairs are disulfide-bonded: Cys18–Cys71, Cys19–Cys33, Cys22–Cys67, Cys23–Cys31, Cys41–Cys48, Cys45–Cys60, and Cys50–Cys58.

The protein belongs to the Bowman-Birk serine protease inhibitor family.

The chain is Bowman-Birk type proteinase inhibitor DE-4 from Philenoptera violacea (Apple-leaf).